The chain runs to 672 residues: F(420)H(2) dehydrogenase subunit L (672 aa).

Helical transmembrane passes span 8-28 (EFAFLIPLLPALAFAITFFFG), 37-57 (IVPILAIAASFVISFAITLGL), 79-99 (ILIDPLAAVMLSMVSFVSLLI), 136-156 (ILQLFVSWELVGLCSYLLIGF), 179-199 (VMFLTGIIVLTSDLLKVSGGF), 225-245 (ILGFEISHLTIITLLFFGGAV), 265-285 (TTVSALIHAATMVTAGVYLVA), 298-318 (LMVVAYFGGFTALFAGTMGIV), 337-357 (MMLGLGLGTAIGLEAVGISLF), 360-380 (INHAFFKALLFLCAGSVIHAV), 394-414 (VMPITAATMTIAALALAGFGI), 447-467 (YVFSILAALLTSIYIFRLIFM), 483-503 (PAIMTIPLSILAIFALAFGAL), 545-565 (LAVLWPPVIVALAGFAIAFVI), 601-621 (FSIGIVYGIIAFLTQVVDVII), and 652-672 (TALIAGVSLLIILVKLIMEVL).

The protein belongs to the complex I subunit 5 family. As to quaternary structure, the FPO complex is composed of at least 13 different subunits. FpoA, FpoH, FpoJ, FpoK, FpoL, FpoM and FpoN proteins constitute the membrane sector of the complex.

The protein resides in the cell membrane. It catalyses the reaction methanophenazine + reduced coenzyme F420-(gamma-L-Glu)(n) = dihydromethanophenazine + oxidized coenzyme F420-(gamma-L-Glu)(n) + H(+). Component of the F(420)H(2) dehydrogenase (FPO complex) which is part of the energy-conserving F(420)H(2):heterodisulfide oxidoreductase system. The membrane-bound electron transfer system of the complex plays an important role in the metabolism of methylotrophic methanogens when the organisms grow on methanol or methylamines. Catalyzes the oxidation of methanophenazine to dihydromethanophenazine. It shuttles electrons from F(420)H(2), via FAD and iron-sulfur (Fe-S) centers, to methanophenazine (an electron carrier in the membrane). It couples the redox reaction to proton translocation (for every two electrons transferred, two hydrogen ions are translocated across the cytoplasmic membrane), and thus conserves the redox energy in a proton gradient. It also catalyzes the oxidation of F(420)H(2) with quinones such as 2,3-dimethyl-1,4-naphthoquinone, 2-methyl-1,4-naphthoquinone and tetramethyl-p-benzoquinone. The polypeptide is F(420)H(2) dehydrogenase subunit L (fpoL) (Methanosarcina mazei (strain ATCC BAA-159 / DSM 3647 / Goe1 / Go1 / JCM 11833 / OCM 88) (Methanosarcina frisia)).